The following is a 336-amino-acid chain: Holliday junction branch migration complex subunit RuvB (336 aa).

The tract at residues 4 to 184 is large ATPase domain (RuvB-L); sequence ADRLIQPQVI…FGIPLRLEFY (181 aa). ATP is bound by residues Arg24, Gly65, Lys68, Thr69, Thr70, 131–133, Arg174, Tyr184, and Arg221; that span reads EDY. A Mg(2+)-binding site is contributed by Thr69. The small ATPAse domain (RuvB-S) stretch occupies residues 185 to 255; the sequence is NIKDLSTIVI…VAELALDMLD (71 aa). Residues 258-336 are head domain (RuvB-H); it reads AEGFDYMDRK…HFNLIQPEAK (79 aa). 3 residues coordinate DNA: Arg294, Arg313, and Arg318.

Belongs to the RuvB family. As to quaternary structure, homohexamer. Forms an RuvA(8)-RuvB(12)-Holliday junction (HJ) complex. HJ DNA is sandwiched between 2 RuvA tetramers; dsDNA enters through RuvA and exits via RuvB. An RuvB hexamer assembles on each DNA strand where it exits the tetramer. Each RuvB hexamer is contacted by two RuvA subunits (via domain III) on 2 adjacent RuvB subunits; this complex drives branch migration. In the full resolvosome a probable DNA-RuvA(4)-RuvB(12)-RuvC(2) complex forms which resolves the HJ.

It localises to the cytoplasm. The catalysed reaction is ATP + H2O = ADP + phosphate + H(+). Functionally, the RuvA-RuvB-RuvC complex processes Holliday junction (HJ) DNA during genetic recombination and DNA repair, while the RuvA-RuvB complex plays an important role in the rescue of blocked DNA replication forks via replication fork reversal (RFR). RuvA specifically binds to HJ cruciform DNA, conferring on it an open structure. The RuvB hexamer acts as an ATP-dependent pump, pulling dsDNA into and through the RuvAB complex. RuvB forms 2 homohexamers on either side of HJ DNA bound by 1 or 2 RuvA tetramers; 4 subunits per hexamer contact DNA at a time. Coordinated motions by a converter formed by DNA-disengaged RuvB subunits stimulates ATP hydrolysis and nucleotide exchange. Immobilization of the converter enables RuvB to convert the ATP-contained energy into a lever motion, pulling 2 nucleotides of DNA out of the RuvA tetramer per ATP hydrolyzed, thus driving DNA branch migration. The RuvB motors rotate together with the DNA substrate, which together with the progressing nucleotide cycle form the mechanistic basis for DNA recombination by continuous HJ branch migration. Branch migration allows RuvC to scan DNA until it finds its consensus sequence, where it cleaves and resolves cruciform DNA. The protein is Holliday junction branch migration complex subunit RuvB of Shewanella piezotolerans (strain WP3 / JCM 13877).